The sequence spans 354 residues: NADH-quinone oxidoreductase subunit H (354 aa).

The next 8 membrane-spanning stretches (helical) occupy residues 16-36 (WLAVLITLVLQAVAVILPVMI), 90-110 (YLFIIAPILALAPAVAAWAVI), 126-146 (VLYVLAVASIGVYGIVISGWA), 170-190 (MGFALVTVLMVADTMNLTGIV), 197-217 (IWNWYWIPLLPMFFVYFISGL), 249-269 (VFFLAEYAMMILISFMTAIMF), 290-310 (VPGFVWLFAKVAFLLFLFLWF), and 329-349 (VLIPVTIVWVFVVGVMEYFKV).

This sequence belongs to the complex I subunit 1 family. As to quaternary structure, NDH-1 is composed of 14 different subunits. Subunits NuoA, H, J, K, L, M, N constitute the membrane sector of the complex.

It is found in the cell inner membrane. It catalyses the reaction a quinone + NADH + 5 H(+)(in) = a quinol + NAD(+) + 4 H(+)(out). Functionally, NDH-1 shuttles electrons from NADH, via FMN and iron-sulfur (Fe-S) centers, to quinones in the respiratory chain. The immediate electron acceptor for the enzyme in this species is believed to be ubiquinone. Couples the redox reaction to proton translocation (for every two electrons transferred, four hydrogen ions are translocated across the cytoplasmic membrane), and thus conserves the redox energy in a proton gradient. This subunit may bind ubiquinone. The polypeptide is NADH-quinone oxidoreductase subunit H (Hydrogenovibrio crunogenus (strain DSM 25203 / XCL-2) (Thiomicrospira crunogena)).